We begin with the raw amino-acid sequence, 136 residues long: Histone H3.3 type c (136 aa).

Residues 1–30 are disordered; that stretch reads MARTKQTARKSTGAKVPRKHLSSKSSFPSK. Position 5 is an N6,N6,N6-trimethyllysine; by set1; alternate (Lys-5). Lys-5 bears the N6,N6-dimethyllysine; by set1; alternate mark. Residues Lys-5 and Lys-10 each carry the N6-acetyllysine; alternate modification. Lys-5 carries the N6-methyllysine; by set1; alternate modification. Lys-10 bears the N6,N6,N6-trimethyllysine; alternate mark. Lys-10 is modified (N6,N6-dimethyllysine; alternate). Lys-10 is modified (N6-methyllysine; alternate). Ser-11 carries the phosphoserine modification. Lys-15 bears the N6-acetyllysine mark. Residues Lys-19, Lys-24, and Lys-37 each carry the N6-acetyllysine; alternate modification. N6-methyllysine; alternate is present on residues Lys-19, Lys-24, and Lys-37. Position 37 is an N6,N6,N6-trimethyllysine; alternate (Lys-37). Lys-37 is subject to N6,N6-dimethyllysine; alternate. N6-acetyllysine is present on Lys-57. Position 80 is an N6,N6,N6-trimethyllysine; alternate (Lys-80). Lys-80 carries the post-translational modification N6,N6-dimethyllysine; alternate. Residue Lys-80 is modified to N6-methyllysine; alternate.

It belongs to the histone H3 family. In terms of assembly, the nucleosome is a histone octamer containing two molecules each of H2A, H2B, H3 and H4 assembled in one H3-H4 heterotetramer and two H2A-H2B heterodimers. The octamer wraps approximately 147 bp of DNA. In terms of processing, acetylation is generally linked to gene activation. Different methylation states of H3K4 mark distinct developmental phases. H3K4me2 is associated with euchromatic regions. H3K4me3 is a mark of active chromatin. set1 is responsible for all mono-, di- and tri-methylation of H3K4. H3K4me facilitates subsequent acetylation of H3 and H4. Methylation at H3K9 is linked to gene repression. Post-translationally, H3S10ph, which is linked to gene activation, prevents methylation at H3K9 but facilitates acetylation of H3 and H4.

Its subcellular location is the nucleus. It localises to the chromosome. Core component of nucleosome. Nucleosomes wrap and compact DNA into chromatin, limiting DNA accessibility to the cellular machineries which require DNA as a template. Histones thereby play a central role in transcription regulation, DNA repair, DNA replication and chromosomal stability. DNA accessibility is regulated via a complex set of post-translational modifications of histones, also called histone code, and nucleosome remodeling. The chain is Histone H3.3 type c (H3c) from Dictyostelium discoideum (Social amoeba).